The chain runs to 151 residues: 1,4-dihydroxy-2-naphthoyl-CoA hydrolase (151 aa).

D23 is a catalytic residue.

Belongs to the 4-hydroxybenzoyl-CoA thioesterase family. DHNA-CoA hydrolase subfamily.

The enzyme catalyses 1,4-dihydroxy-2-naphthoyl-CoA + H2O = 1,4-dihydroxy-2-naphthoate + CoA + H(+). It participates in cofactor biosynthesis; phylloquinone biosynthesis. The protein operates within quinol/quinone metabolism; 1,4-dihydroxy-2-naphthoate biosynthesis; 1,4-dihydroxy-2-naphthoate from chorismate: step 7/7. Catalyzes the hydrolysis of 1,4-dihydroxy-2-naphthoyl-CoA (DHNA-CoA) to 1,4-dihydroxy-2-naphthoate (DHNA), a reaction involved in phylloquinone (vitamin K1) biosynthesis. This is 1,4-dihydroxy-2-naphthoyl-CoA hydrolase from Prochlorococcus marinus (strain MIT 9211).